A 297-amino-acid polypeptide reads, in one-letter code: Small ribosomal subunit biogenesis GTPase RsgA (297 aa).

Residues 65–223 enclose the CP-type G domain; that stretch reads TNEIGRPAVA…IADTPGFSAI (159 aa). GTP contacts are provided by residues 114 to 117 and 166 to 174; these read SKAD and GQSGAGKST. Zn(2+)-binding residues include cysteine 247, cysteine 252, histidine 254, and cysteine 260.

The protein belongs to the TRAFAC class YlqF/YawG GTPase family. RsgA subfamily. Monomer. Associates with 30S ribosomal subunit, binds 16S rRNA. The cofactor is Zn(2+).

The protein localises to the cytoplasm. Its function is as follows. One of several proteins that assist in the late maturation steps of the functional core of the 30S ribosomal subunit. Helps release RbfA from mature subunits. May play a role in the assembly of ribosomal proteins into the subunit. Circularly permuted GTPase that catalyzes slow GTP hydrolysis, GTPase activity is stimulated by the 30S ribosomal subunit. The protein is Small ribosomal subunit biogenesis GTPase RsgA of Lactobacillus gasseri (strain ATCC 33323 / DSM 20243 / BCRC 14619 / CIP 102991 / JCM 1131 / KCTC 3163 / NCIMB 11718 / NCTC 13722 / AM63).